Here is a 628-residue protein sequence, read N- to C-terminus: NUAK family SNF1-like kinase 2 (628 aa).

At methionine 1 the chain carries N-acetylmethionine. The region spanning 53–303 (YEFLETLGKG…LEDVASHWWV (251 aa)) is the Protein kinase domain. Residues 59–67 (LGKGTYGKV) and lysine 81 each bind ATP. The active-site Proton acceptor is aspartate 175. Threonine 208 bears the Phosphothreonine mark. 2 disordered regions span residues 355 to 492 (KQHA…PQAS) and 522 to 570 (GSLD…PLRG). Positions 428-444 (ELSPIPVSPGQAAPPLP) are enriched in pro residues. A Phosphoserine modification is found at serine 435. The segment covering 457–469 (SGYYSSPEPSESG) has biased composition (low complexity). 4 positions are modified to phosphoserine: serine 523, serine 544, serine 547, and serine 573.

The protein belongs to the protein kinase superfamily. CAMK Ser/Thr protein kinase family. SNF1 subfamily. Mg(2+) serves as cofactor. In terms of processing, phosphorylated at Thr-208 by STK11/LKB1 in complex with STE20-related adapter-alpha (STRADA) pseudo kinase and CAB39. Autophosphorylation is also possible at Thr-208.

It catalyses the reaction L-seryl-[protein] + ATP = O-phospho-L-seryl-[protein] + ADP + H(+). The catalysed reaction is L-threonyl-[protein] + ATP = O-phospho-L-threonyl-[protein] + ADP + H(+). With respect to regulation, activated by phosphorylation on Thr-208. Stress-activated kinase involved in tolerance to glucose starvation. Induces cell-cell detachment by increasing F-actin conversion to G-actin. Expression is induced by CD95 or TNF-alpha, via NF-kappa-B. Protects cells from CD95-mediated apoptosis and is required for the increased motility and invasiveness of CD95-activated tumor cells. Phosphorylates LATS1 and LATS2. Plays a key role in neural tube closure during embryonic development through LATS2 phosphorylation and regulation of the nuclear localization of YAP1 a critical downstream regulatory target in the Hippo signaling pathway. The sequence is that of NUAK family SNF1-like kinase 2 from Pongo abelii (Sumatran orangutan).